A 1371-amino-acid chain; its full sequence is DNA-directed RNA polymerase subunit beta' (1371 aa).

C71, C73, C86, and C89 together coordinate Zn(2+). Mg(2+) contacts are provided by D461, D463, and D465. The Zn(2+) site is built by C803, C877, C884, and C887.

Belongs to the RNA polymerase beta' chain family. The RNAP catalytic core consists of 2 alpha, 1 beta, 1 beta' and 1 omega subunit. When a sigma factor is associated with the core the holoenzyme is formed, which can initiate transcription. It depends on Mg(2+) as a cofactor. Requires Zn(2+) as cofactor.

The catalysed reaction is RNA(n) + a ribonucleoside 5'-triphosphate = RNA(n+1) + diphosphate. DNA-dependent RNA polymerase catalyzes the transcription of DNA into RNA using the four ribonucleoside triphosphates as substrates. The polypeptide is DNA-directed RNA polymerase subunit beta' (Thermodesulfovibrio yellowstonii (strain ATCC 51303 / DSM 11347 / YP87)).